An 87-amino-acid polypeptide reads, in one-letter code: Large ribosomal subunit protein eL31 (87 aa).

The protein belongs to the eukaryotic ribosomal protein eL31 family.

The sequence is that of Large ribosomal subunit protein eL31 (rpl31e) from Methanocaldococcus jannaschii (strain ATCC 43067 / DSM 2661 / JAL-1 / JCM 10045 / NBRC 100440) (Methanococcus jannaschii).